Here is a 208-residue protein sequence, read N- to C-terminus: NAD(P)H-quinone oxidoreductase subunit M, chloroplastic (208 aa).

A chloroplast-targeting transit peptide spans 1–21; the sequence is MAATSSYTACTKFSMLGWIGG. The span at 37 to 49 shows a compositional bias: low complexity; the sequence is QQAEVEESQQVNA. Positions 37–70 are disordered; that stretch reads QQAEVEESQQVNAQEEEQEKMKQQGKQKLPRPVE.

Belongs to the NDH complex subunit M family. As to quaternary structure, part of the chloroplast NDH complex, composed of a mixture of chloroplast and nucleus encoded subunits. Component of the NDH subcomplex A, at least composed of ndhH, ndhI, ndhJ, ndhK, ndhL, ndhM, ndhN and ndhO.

The protein localises to the plastid. It localises to the chloroplast thylakoid membrane. It catalyses the reaction a plastoquinone + NADH + (n+1) H(+)(in) = a plastoquinol + NAD(+) + n H(+)(out). The catalysed reaction is a plastoquinone + NADPH + (n+1) H(+)(in) = a plastoquinol + NADP(+) + n H(+)(out). Functionally, NDH shuttles electrons from NAD(P)H:plastoquinone, via FMN and iron-sulfur (Fe-S) centers, to quinones in the photosynthetic chain and possibly in a chloroplast respiratory chain. The immediate electron acceptor for the enzyme in this species is believed to be plastoquinone. Couples the redox reaction to proton translocation, and thus conserves the redox energy in a proton gradient. The protein is NAD(P)H-quinone oxidoreductase subunit M, chloroplastic of Vitis vinifera (Grape).